The following is a 249-amino-acid chain: Probable septum site-determining protein MinC (249 aa).

The tract at residues 116 to 149 (AAVSPPPPPPPPPARAEPAAPVARPAPGRMQRNA) is disordered. Residues 119-130 (SPPPPPPPPPAR) show a composition bias toward pro residues. Residues 131–142 (AEPAAPVARPAP) are compositionally biased toward low complexity.

The protein belongs to the MinC family. In terms of assembly, interacts with MinD and FtsZ.

In terms of biological role, cell division inhibitor that blocks the formation of polar Z ring septums. Rapidly oscillates between the poles of the cell to destabilize FtsZ filaments that have formed before they mature into polar Z rings. Prevents FtsZ polymerization. The polypeptide is Probable septum site-determining protein MinC (Xanthomonas campestris pv. campestris (strain B100)).